Consider the following 218-residue polypeptide: Ras-related protein YPT3 (218 aa).

20 to 27 (GDSGVGKS) contacts GTP. An Effector region motif is present at residues 42–50 (SKSTIGVEF). Residues 68–72 (DTAGQ) and 126–129 (NKSD) contribute to the GTP site. A disordered region spans residues 186–205 (GDEGATSSAPPKGETINIKD). 2 S-geranylgeranyl cysteine lipidation sites follow: cysteine 215 and cysteine 216.

This sequence belongs to the small GTPase superfamily. Rab family. As to expression, its expression is weak in leaves, higher in stems and roots, but highest in petals, stigma and stamens.

The protein resides in the cell membrane. Its function is as follows. Protein transport. Probably involved in vesicular traffic. The chain is Ras-related protein YPT3 (YPT3) from Nicotiana plumbaginifolia (Leadwort-leaved tobacco).